Here is a 127-residue protein sequence, read N- to C-terminus: UPF0102 protein Mmar10_3014 (127 aa).

This sequence belongs to the UPF0102 family.

This Maricaulis maris (strain MCS10) (Caulobacter maris) protein is UPF0102 protein Mmar10_3014.